The following is a 621-amino-acid chain: GPI-anchor transamidase component GPAA1 (621 aa).

The Cytoplasmic portion of the chain corresponds to 1 to 19 (MGLLSDPVRRRALARIVLR). A helical membrane pass occupies residues 20–41 (LNTPLCVLSYVAGIAWFLALAF). Residues 42–370 (PPLTQRTYMS…LLPALSRFVS (329 aa)) are Lumenal-facing. Residues Tyr-49 and Ser-51 each coordinate a 2-acyl-6-[6-phosphoethanolamine-alpha-D-mannosyl-(1-&gt;2)-6-phosphoethanolamine-alpha-D-mannosyl-(1-&gt;6)-2-phosphoethanolamine-alpha-D-mannosyl-(1-&gt;4)-alpha-D-glucosaminyl]-1-(1-radyl,2-acyl-sn-glycero-3-phospho)-1D-myo-inositol. A glycan (N-linked (GlcNAc...) asparagine) is linked at Asn-203. The cysteines at positions 259 and 266 are disulfide-linked. A 2-acyl-6-[6-phosphoethanolamine-alpha-D-mannosyl-(1-&gt;2)-6-phosphoethanolamine-alpha-D-mannosyl-(1-&gt;6)-2-phosphoethanolamine-alpha-D-mannosyl-(1-&gt;4)-alpha-D-glucosaminyl]-1-(1-radyl,2-acyl-sn-glycero-3-phospho)-1D-myo-inositol-binding residues include His-354, Gln-355, and Ser-356. Position 355 (Gln-355) interacts with Mg(2+). The chain crosses the membrane as a helical span at residues 371–393 (IGLYMPATGFLLLVLGLKALELW). Residues 394-425 (MQLHQAGVNPEEAGKAPSPGTPLLPTQGVGLA) are Cytoplasmic-facing. A helical membrane pass occupies residues 426–450 (SLTAPLLISQAMGLALYFLPVLGQH). Over 451-462 (LATQHFPVAEAE) the chain is Lumenal. A helical membrane pass occupies residues 463–483 (AVVLTLLAIYVAGLALPHNTH). At 484–495 (RVVNSQVPDRGW) the chain is on the cytoplasmic side. 2 helical membrane-spanning segments follow: residues 496–519 (MALKLVALIYLALQLGCIALLNFS) and 520–536 (LGFLLAATMVPAAALAK). Residues 537–540 (PHGP) are Cytoplasmic-facing. Residues 541–563 (RTLYAALLVVTSPAVTLFGSLFL) traverse the membrane as a helical segment. Over 564–597 (WRELLEVPLSLAEGWQLFLTALAQGVLEHYTYGA) the chain is Lumenal. Residues 598–619 (LLFPILALGLYPCWLLFWNVLF) form a helical membrane-spanning segment. Residues 620–621 (WK) lie on the Cytoplasmic side of the membrane.

In terms of assembly, heteropentamer. Part of the GPI-anchor transamidase complex, consisting of PIGK, PIGT, PIGS, PIGU and GAA1. Interacts with PIGK. Ubiquitously expressed in fetal and adult tissues. Expressed at higher levels in fetal tissues than adult tissues. In embryos abundant in the choroid plexus, skeletal muscle,.

It localises to the endoplasmic reticulum membrane. It functions in the pathway glycolipid biosynthesis; glycosylphosphatidylinositol-anchor biosynthesis. Its function is as follows. Component of the glycosylphosphatidylinositol-anchor (GPI-anchor) transamidase (GPI-T) complex that catalyzes the formation of the linkage between a proprotein and a GPI-anchor and participates in GPI anchored protein biosynthesis. Binds GPI-anchor. This Mus musculus (Mouse) protein is GPI-anchor transamidase component GPAA1.